Here is an 872-residue protein sequence, read N- to C-terminus: MLTAKEIRDSFKNFFESKGHHIVPSAPMVIKDDPTLMFTNAGMNQFKDIILGNHPAKYHRVADSQKCLRVSGKHNDLEEVGHDTYHHTMFEMLGNWSFGDYFKKEAINWAWEYLVEVLKLNPEHLYATVFEGSPEEGLSRDDEAASYWEQYLPKDHIINGNKHDNFWEMGDTGPCGPCSEIHIDLRPAEERAKISGRDLVNHDHPQVIEIWNLVFMQYNRKADGSLEPLPAKVIDTGMGFERLCMALQGKTSNYDTDVFQPMLKAIAAMSGTEYGKDKQQDIAMRVIADHIRTIAFSITDGQLPSNAKAGYVIRRILRRAVRYGYTFLGQKQSFMYKLLPVLIDNMGDAYPELIAQKGLIEKVIKEEEEAFLRTLETGIRLLDKTMGDTKAAGKTEISGKDAFTLYDTFGFPLDLTELILRENGMTVNIEEFNAEMQQQKQRARNAAAIETGDWVTLREGTTEFVGYDYTEYEASILRYRQIKQKNQTLYQIVLDCTPFYAESGGQVGDTGVLVSEFETIEVIDTKKENNLPIHITKKLPEHPEAPMMACVDTDKRAACAANHSATHLLDSALREVLGEHIEQKGSLVTPDSLRFDFSHFQKVTDEEIRQVEHLVNAKIRANIPLKEYRNIPIEEAKELGAIALFGEKYGERVRVIQFGSSIEFCGGIHVAATGNIGMVKIISESSVAAGVRRIEAYTGARVEEMLDTIQDTISELKSLFNNAPDLGIAIRKYIEENAGLKKQVEDYMKEKEASLKERLLKNIQEIHGIKVIKFCAPLPAEVVKNIAFQLRGEITENLFFVAGSLDNGKPMLTVMLSDNLVAGGLKAGNLVKEAAKLIQGGGGGQPHFATAGGKNTDGLNAAIEKVLELAGI.

Zn(2+)-binding residues include His-563, His-567, Cys-665, and His-669.

This sequence belongs to the class-II aminoacyl-tRNA synthetase family. The cofactor is Zn(2+).

It is found in the cytoplasm. The catalysed reaction is tRNA(Ala) + L-alanine + ATP = L-alanyl-tRNA(Ala) + AMP + diphosphate. Its function is as follows. Catalyzes the attachment of alanine to tRNA(Ala) in a two-step reaction: alanine is first activated by ATP to form Ala-AMP and then transferred to the acceptor end of tRNA(Ala). Also edits incorrectly charged Ser-tRNA(Ala) and Gly-tRNA(Ala) via its editing domain. This Bacteroides thetaiotaomicron (strain ATCC 29148 / DSM 2079 / JCM 5827 / CCUG 10774 / NCTC 10582 / VPI-5482 / E50) protein is Alanine--tRNA ligase.